Consider the following 162-residue polypeptide: 2-C-methyl-D-erythritol 2,4-cyclodiphosphate synthase (162 aa).

A divalent metal cation-binding residues include Asp9 and His11. Residues Asp9 to His11 and His37 to Ser38 each bind 4-CDP-2-C-methyl-D-erythritol 2-phosphate. His45 is an a divalent metal cation binding site. 4-CDP-2-C-methyl-D-erythritol 2-phosphate contacts are provided by residues Asp59–Gly61, Phe64–Asp68, Thr135–Glu138, and Arg145.

It belongs to the IspF family. In terms of assembly, homotrimer. A divalent metal cation serves as cofactor.

It catalyses the reaction 4-CDP-2-C-methyl-D-erythritol 2-phosphate = 2-C-methyl-D-erythritol 2,4-cyclic diphosphate + CMP. It participates in isoprenoid biosynthesis; isopentenyl diphosphate biosynthesis via DXP pathway; isopentenyl diphosphate from 1-deoxy-D-xylulose 5-phosphate: step 4/6. In terms of biological role, involved in the biosynthesis of isopentenyl diphosphate (IPP) and dimethylallyl diphosphate (DMAPP), two major building blocks of isoprenoid compounds. Catalyzes the conversion of 4-diphosphocytidyl-2-C-methyl-D-erythritol 2-phosphate (CDP-ME2P) to 2-C-methyl-D-erythritol 2,4-cyclodiphosphate (ME-CPP) with a corresponding release of cytidine 5-monophosphate (CMP). In Leptospira biflexa serovar Patoc (strain Patoc 1 / Ames), this protein is 2-C-methyl-D-erythritol 2,4-cyclodiphosphate synthase.